Consider the following 566-residue polypeptide: Proline--tRNA ligase (566 aa).

Belongs to the class-II aminoacyl-tRNA synthetase family. ProS type 1 subfamily. Homodimer.

The protein resides in the cytoplasm. The enzyme catalyses tRNA(Pro) + L-proline + ATP = L-prolyl-tRNA(Pro) + AMP + diphosphate. In terms of biological role, catalyzes the attachment of proline to tRNA(Pro) in a two-step reaction: proline is first activated by ATP to form Pro-AMP and then transferred to the acceptor end of tRNA(Pro). As ProRS can inadvertently accommodate and process non-cognate amino acids such as alanine and cysteine, to avoid such errors it has two additional distinct editing activities against alanine. One activity is designated as 'pretransfer' editing and involves the tRNA(Pro)-independent hydrolysis of activated Ala-AMP. The other activity is designated 'posttransfer' editing and involves deacylation of mischarged Ala-tRNA(Pro). The misacylated Cys-tRNA(Pro) is not edited by ProRS. The protein is Proline--tRNA ligase of Bacillus cytotoxicus (strain DSM 22905 / CIP 110041 / 391-98 / NVH 391-98).